The primary structure comprises 51 residues: Lantibiotic streptococcin A-M49 (51 aa).

Residues 1–25 constitute a propeptide that is removed on maturation; that stretch reads MTKEHEIINSIQEVSLEELDQIIGA. Cross-links (beta-methyllanthionine (Thr-Cys)) lie at residues 33 to 38 and 42 to 50; these read TISHEC and TWAFLATCC. Positions 35-49 form a cross-link, lanthionine (Ser-Cys); that stretch reads SHECHLNTWAFLATC. Thr48 is subject to 2,3-didehydrobutyrine.

It belongs to the type A lantibiotic family. Post-translationally, maturation of lantibiotics involves the enzymatic conversion of Thr, and Ser into dehydrated AA and the formation of thioether bonds with cysteine. This is followed by membrane translocation and cleavage of the modified precursor.

It localises to the secreted. The protein localises to the cell surface. Lanthionine-containing peptide antibiotic (lantibiotic) active on certain Gram-positive bacteria. The bactericidal activity of lantibiotics is based on depolarization of energized bacterial cytoplasmic membranes, initiated by the formation of aqueous transmembrane pores. The sequence is that of Lantibiotic streptococcin A-M49 (scnA') from Streptococcus pyogenes serotype M49.